A 72-amino-acid polypeptide reads, in one-letter code: Penaeidin-2a (72 aa).

An N-terminal signal peptide occupies residues 1–21; that stretch reads MRLVVCLVFLASFALVCQGEA. 3 disulfide bridges follow: cysteine 45–cysteine 59, cysteine 48–cysteine 66, and cysteine 60–cysteine 67. The residue at position 71 (lysine 71) is a Lysine amide.

In terms of tissue distribution, higher expression in hemocytes and to a lesser extent in heart, testis, gills, intestine, lymphoid organ and hepatopancreas. Traces in eyes and subcuticular epithelium. Not present in the brain.

The protein resides in the cytoplasmic granule. Antibacterial activity against M.luteus and E.coli bacteria. Antifungal activity against N.crassa and F.oxysporum. Presents chitin-binding activity. The chain is Penaeidin-2a from Penaeus vannamei (Whiteleg shrimp).